The primary structure comprises 447 residues: Probable asparagine--tRNA ligase, cytoplasmic (447 aa).

The protein belongs to the class-II aminoacyl-tRNA synthetase family.

It is found in the cytoplasm. The enzyme catalyses tRNA(Asn) + L-asparagine + ATP = L-asparaginyl-tRNA(Asn) + AMP + diphosphate + H(+). The protein is Probable asparagine--tRNA ligase, cytoplasmic of Vairimorpha ceranae (strain BRL01) (Microsporidian parasite).